Reading from the N-terminus, the 66-residue chain is Regulator of G-protein signaling 6 (66 aa).

Residues 1-66 (LAVQDLKKQP…EDAQEHIYKL (66 aa)) form the RGS domain.

Interacts with GNB5. Interacts with RGS7BP, leading to regulate the subcellular location of the heterodimer formed with GNB5. Interacts with GNAI1.

It is found in the cytoplasm. It localises to the cytosol. The protein localises to the membrane. Its subcellular location is the nucleus. The protein resides in the cell membrane. Its function is as follows. Regulates G protein-coupled receptor signaling cascades. Inhibits signal transduction by increasing the GTPase activity of G protein alpha subunits, thereby driving them into their inactive GDP-bound form. The RGS6/GNB5 dimer enhances GNAO1 GTPase activity. This is Regulator of G-protein signaling 6 (Rgs6) from Rattus norvegicus (Rat).